The sequence spans 267 residues: Sulfate transporter CysZ (267 aa).

4 consecutive transmembrane segments (helical) span residues F29 to I49, I73 to L93, I149 to V169, and G212 to V232.

Belongs to the CysZ family.

The protein resides in the cell inner membrane. Functionally, high affinity, high specificity proton-dependent sulfate transporter, which mediates sulfate uptake. Provides the sulfur source for the cysteine synthesis pathway. This chain is Sulfate transporter CysZ, found in Pasteurella multocida (strain Pm70).